The chain runs to 312 residues: Putative electron transfer flavoprotein subunit YdiR (312 aa).

Residue 254–282 participates in FAD binding; the sequence is LYLTLGISGQIQHMVGGNGAKVIVAINKD.

The protein belongs to the ETF alpha-subunit/FixB family. YdiR and YdiQ form a heterodimer.

Functionally, may play a role in a redox process. The sequence is that of Putative electron transfer flavoprotein subunit YdiR (ydiR) from Escherichia coli (strain K12).